Consider the following 154-residue polypeptide: NADPH-dependent 7-cyano-7-deazaguanine reductase (154 aa).

Cys-52 acts as the Thioimide intermediate in catalysis. Asp-59 functions as the Proton donor in the catalytic mechanism. Residues 74–76 (VES) and 93–94 (HE) each bind substrate.

This sequence belongs to the GTP cyclohydrolase I family. QueF type 1 subfamily.

The protein localises to the cytoplasm. The catalysed reaction is 7-aminomethyl-7-carbaguanine + 2 NADP(+) = 7-cyano-7-deazaguanine + 2 NADPH + 3 H(+). It functions in the pathway tRNA modification; tRNA-queuosine biosynthesis. In terms of biological role, catalyzes the NADPH-dependent reduction of 7-cyano-7-deazaguanine (preQ0) to 7-aminomethyl-7-deazaguanine (preQ1). The polypeptide is NADPH-dependent 7-cyano-7-deazaguanine reductase (Paracoccus denitrificans (strain Pd 1222)).